Here is a 286-residue protein sequence, read N- to C-terminus: Phycobilisome 31.8 kDa linker polypeptide, phycoerythrin-associated, rod (286 aa).

In terms of domain architecture, PBS-linker spans 2 to 179 (PFGPASRLGV…LVRGASSSSL (178 aa)). In terms of domain architecture, CpcD-like spans 231 to 286 (GKVYRIEVTGYRAKTFNNISKFRRSNQVFLVPYEKLSQEYQRIHQQGGVIASITPV).

Belongs to the phycobilisome linker protein family. As to quaternary structure, the phycobilisome is a hemidiscoidal structure that is composed of two distinct substructures: a core complex and six rods radiating from the core.

The protein resides in the cellular thylakoid membrane. Its function is as follows. Rod linker protein, associated with phycoerythrocyanin. Linker polypeptides determine the state of aggregation and the location of the disk-shaped phycobiliprotein units within the phycobilisome and modulate their spectroscopic properties in order to mediate a directed and optimal energy transfer. The polypeptide is Phycobilisome 31.8 kDa linker polypeptide, phycoerythrin-associated, rod (cpeC) (Microchaete diplosiphon (Fremyella diplosiphon)).